The chain runs to 615 residues: Gluconate 2-dehydrogenase flavoprotein (615 aa).

The first 22 residues, 1-22, serve as a signal peptide directing secretion; sequence MERGERVSVPVSGYSRGEGVTV. The active-site Proton acceptor is the H542.

This sequence belongs to the GMC oxidoreductase family. As to quaternary structure, heterotrimer. FAD is required as a cofactor.

It is found in the cell membrane. It catalyses the reaction D-gluconate + A = 2-dehydro-D-gluconate + AH2. Functionally, part of the heterotrimer that catalyzes the conversion of D-gluconate to 2-dehydro-D-gluconate. This subunit functions as the dehydrogenase. The chain is Gluconate 2-dehydrogenase flavoprotein from Pantoea cypripedii (Pectobacterium cypripedii).